The primary structure comprises 1035 residues: Potassium-transporting ATPase alpha chain 1 (1035 aa).

The segment at 1-41 is disordered; it reads MGKADNYELYSVELGPGPGGDMAAKMSKKKKAGGGGGKRKE. Residues 1–98 are Cytoplasmic-facing; sequence MGKADNYELY…NALRPPRGTP (98 aa). A phosphotyrosine mark is found at Y7 and Y10. Basic residues predominate over residues 26 to 40; sequence MSKKKKAGGGGGKRK. Residue S27 is modified to Phosphoserine. The helical transmembrane segment at 99–119 threads the bilayer; it reads EYVKFARQLAGGLQCLMWVAA. The Lumenal portion of the chain corresponds to 120–142; it reads AICLIAFAIQASEGDLTTDDNLY. The chain crosses the membrane as a helical span at residues 143–163; it reads LALALIAVVVVTGCFGYYQEF. The Cytoplasmic portion of the chain corresponds to 164-299; sequence KSTNIIASFK…NEKTPIAIEI (136 aa). The chain crosses the membrane as a helical span at residues 300–319; it reads EHFVDIIAGLAILFGATFFV. At 320-331 the chain is on the lumenal side; that stretch reads VAMCIGYTFLRA. The chain crosses the membrane as a helical span at residues 332 to 349; the sequence is MVFFMAIVVAYVPEGLLA. Residues V340, A341, V343, and E345 each coordinate K(+). Topologically, residues 350–783 are cytoplasmic; that stretch reads TVTVCLSLTA…EQGRLIFDNL (434 aa). Catalysis depends on D387, which acts as the 4-aspartylphosphate intermediate. Residues D387 and T389 each contribute to the Mg(2+) site. A phosphoserine mark is found at S463 and S601. Residues D728 and D732 each contribute to the Mg(2+) site. A helical transmembrane segment spans residues 784-803; that stretch reads KKSIAYTLTKNIPELTPYLI. E797 provides a ligand contact to K(+). Over 804-813 the chain is Lumenal; sequence YITVSVPLPL. Residues 814–834 form a helical membrane-spanning segment; it reads GCITILFIELCTDIFPSVSLA. E822 provides a ligand contact to K(+). Residues 835–854 lie on the Cytoplasmic side of the membrane; sequence YEKAESDIMHLRPRNPKRDR. S840 is subject to Phosphoserine. Residues 855–877 traverse the membrane as a helical segment; sequence LVNEPLAAYSYFQIGAIQSFAGF. Residues 878–929 lie on the Lumenal side of the membrane; it reads TDYFTAMAQEGWFPLLCVGLRPQWEDHHLQDLQDSYGQEWTFGQRLYQQYTC. Residues 930 to 949 traverse the membrane as a helical segment; the sequence is YTVFFISIEMCQIADVLIRK. The Cytoplasmic portion of the chain corresponds to 950–963; sequence TRRLSAFQQGFFRN. S954 is subject to Phosphoserine; by PKA. Residues 964-982 traverse the membrane as a helical segment; sequence RILVIAIVFQVCIGCFLCY. Residues 983–997 are Lumenal-facing; sequence CPGMPNIFNFMPIRF. A helical membrane pass occupies residues 998 to 1018; sequence QWWLVPMPFGLLIFVYDEIRK. The Cytoplasmic portion of the chain corresponds to 1019-1035; that stretch reads LGVRCCPGSWWDQELYY.

Belongs to the cation transport ATPase (P-type) (TC 3.A.3) family. Type IIC subfamily. The gastric H(+)/K(+) ATPase pump is composed of the catalytic alpha subunit ATP4A and the regulatory beta subunit ATP4B. Interacts (via the P-domain) with ATP4B (via N-terminus); this interaction stabilizes the lumenal-open E2 conformation state and prevents the reverse reaction of the transport cycle.

It is found in the apical cell membrane. The protein resides in the cell membrane. It catalyses the reaction K(+)(out) + ATP + H2O + H(+)(in) = K(+)(in) + ADP + phosphate + 2 H(+)(out). Its function is as follows. The catalytic subunit of the gastric H(+)/K(+) ATPase pump which transports H(+) ions in exchange for K(+) ions across the apical membrane of parietal cells. Uses ATP as an energy source to pump H(+) ions to the gastric lumen while transporting K(+) ion from the lumen into the cell. Remarkably generates a million-fold proton gradient across the gastric parietal cell membrane, acidifying the gastric juice down to pH 1. Within a transport cycle, the transfer of a H(+) ion across the membrane is coupled to ATP hydrolysis and is associated with a transient phosphorylation that shifts the pump conformation from inward-facing (E1) to outward-facing state (E2). The release of the H(+) ion in the stomach lumen is followed by binding of K(+) ion converting the pump conformation back to the E1 state. The polypeptide is Potassium-transporting ATPase alpha chain 1 (ATP4A) (Oryctolagus cuniculus (Rabbit)).